Consider the following 217-residue polypeptide: GTP-binding protein Rit2 (217 aa).

Residues 27 to 34 (GAGGVGKS), 74 to 78 (DTAGQ), and 133 to 136 (NKID) contribute to the GTP site.

This sequence belongs to the small GTPase superfamily. Ras family. In terms of assembly, interacts with PLXNB3. Interacts with AFDN, the C-terminal domain of RALGDS and RLF, but not with RIN1 and PIK3CA. RLF binds exclusively to the active GTP-bound form. Binds calmodulin. Interacts with POU4F1 (via N-terminus); the interaction controls POU4F1 transactivation activity on some neuronal target genes. In terms of tissue distribution, expressed in ganglion cell layer (GCL), inner plexiform layer (IPL) and inner nuclear layer (INL) of the retina. Expressed in retinal ganglion cells (RGCs). Expressed in horizontal, bipolar and amacrine cells, but not Mueller glia, of the INL (at protein level). Neuron-specific. Expressed in ganglion cell layer (GCL) and inner plexiform layer (IPL).

Its subcellular location is the nucleus. It is found in the cell membrane. The enzyme catalyses GTP + H2O = GDP + phosphate + H(+). Alternates between an inactive form bound to GDP and an active form bound to GTP. Binds and exchanges GTP and GDP. Binds and modulates the activation of POU4F1 as gene expression regulator. In Mus musculus (Mouse), this protein is GTP-binding protein Rit2 (Rit2).